Reading from the N-terminus, the 286-residue chain is 4-diphosphocytidyl-2-C-methyl-D-erythritol kinase (286 aa).

Lys-11 is a catalytic residue. ATP is bound at residue 93–103; that stretch reads PFGAGLGGGSS. Residue Asp-135 is part of the active site.

This sequence belongs to the GHMP kinase family. IspE subfamily.

The enzyme catalyses 4-CDP-2-C-methyl-D-erythritol + ATP = 4-CDP-2-C-methyl-D-erythritol 2-phosphate + ADP + H(+). It functions in the pathway isoprenoid biosynthesis; isopentenyl diphosphate biosynthesis via DXP pathway; isopentenyl diphosphate from 1-deoxy-D-xylulose 5-phosphate: step 3/6. Functionally, catalyzes the phosphorylation of the position 2 hydroxy group of 4-diphosphocytidyl-2C-methyl-D-erythritol. In Chlorobium phaeobacteroides (strain BS1), this protein is 4-diphosphocytidyl-2-C-methyl-D-erythritol kinase.